The chain runs to 90 residues: 10 kDa anti-sigma factor (90 aa).

As to quaternary structure, interacts with the host sigma factor RpoD, and thereby inhibits its interaction with the catalytic core of the host RNA polymerase.

In terms of biological role, transcriptional inhibitor. Inhibits sigma 70-directed transcription by weakening its interaction with the core of the host's RNA polymerase. This allows Gp55 to successfully compete for the core enzyme. Plays an important role during the prereplicative period of phage T4 development. The polypeptide is 10 kDa anti-sigma factor (asiA) (Enterobacteria phage T4 (Bacteriophage T4)).